The sequence spans 200 residues: Recombination protein RecR (200 aa).

The segment at 58–73 (CEVCHNLAEEGLCAIC) adopts a C4-type zinc-finger fold. The region spanning 81 to 176 (GLICVVEEPV…DISRLAYGMP (96 aa)) is the Toprim domain.

Belongs to the RecR family.

Its function is as follows. May play a role in DNA repair. It seems to be involved in an RecBC-independent recombinational process of DNA repair. It may act with RecF and RecO. The protein is Recombination protein RecR of Magnetococcus marinus (strain ATCC BAA-1437 / JCM 17883 / MC-1).